A 290-amino-acid chain; its full sequence is Non-homologous end joining protein Ku (290 aa).

The Ku domain occupies 11-183 (TFGLISMPVR…EAPKITSEVK (173 aa)). The segment at 253–290 (MKDQKKGSRLAEVDKESTVQMTPKKPAVKERRGRKRVA) is disordered. The segment covering 254–269 (KDQKKGSRLAEVDKES) has biased composition (basic and acidic residues).

It belongs to the prokaryotic Ku family. As to quaternary structure, homodimer. Interacts with LigD.

With LigD forms a non-homologous end joining (NHEJ) DNA repair enzyme, which repairs dsDNA breaks with reduced fidelity. Binds linear dsDNA with 5'- and 3'- overhangs but not closed circular dsDNA nor ssDNA. Recruits and stimulates the ligase activity of LigD. The chain is Non-homologous end joining protein Ku from Koribacter versatilis (strain Ellin345).